We begin with the raw amino-acid sequence, 339 residues long: 2-oxoisovalerate dehydrogenase subunit beta (339 aa).

As to quaternary structure, heterodimer of an alpha and a beta chain. The cofactor is thiamine diphosphate.

It carries out the reaction N(6)-[(R)-lipoyl]-L-lysyl-[protein] + 3-methyl-2-oxobutanoate + H(+) = N(6)-[(R)-S(8)-2-methylpropanoyldihydrolipoyl]-L-lysyl-[protein] + CO2. Its function is as follows. The branched-chain alpha-keto dehydrogenase complex catalyzes the overall conversion of alpha-keto acids to acyl-CoA and CO(2). It contains multiple copies of three enzymatic components: branched-chain alpha-keto acid decarboxylase (E1), lipoamide acyltransferase (E2) and lipoamide dehydrogenase (E3). This Pseudomonas putida (Arthrobacter siderocapsulatus) protein is 2-oxoisovalerate dehydrogenase subunit beta (bkdA2).